The primary structure comprises 335 residues: MKESIAVLGAGSWGTALAVLLAHKGFRVNLWARRPELATALRETGENKTYLPGVRLTGTIIPTADLPAAVKGAGLVVLSVPSHAVRSTARLLKPFLPKGTVVVNTAKGLELETKKRLSQVLVEEGLDRVAVLSGPSHAEEVGRGLPTTVVVAAADRETAEYVQDVFMDPTFRVYTNPDIIGVEFGGALKNIIALATGMADGLGLGDNTRAALMTRGMAEIARLGVALGGKVLTFAGLSGIGDLIVTCTSMYSRNRRAGILLGKGQSLEEVLDAVGMVVEGVRTTAAARELACQHGIKMPITEEIYQVLYKGKPVGDCVAALMERPRTHEVESGDW.

NADPH-binding residues include serine 12, tryptophan 13, arginine 33, arginine 34, and lysine 107. 3 residues coordinate sn-glycerol 3-phosphate: lysine 107, glycine 134, and serine 136. Alanine 138 contributes to the NADPH binding site. Sn-glycerol 3-phosphate-binding residues include lysine 189, aspartate 242, serine 252, arginine 253, and asparagine 254. Lysine 189 acts as the Proton acceptor in catalysis. NADPH is bound at residue arginine 253. NADPH contacts are provided by valine 277 and glutamate 279.

This sequence belongs to the NAD-dependent glycerol-3-phosphate dehydrogenase family.

It localises to the cytoplasm. It catalyses the reaction sn-glycerol 3-phosphate + NAD(+) = dihydroxyacetone phosphate + NADH + H(+). The catalysed reaction is sn-glycerol 3-phosphate + NADP(+) = dihydroxyacetone phosphate + NADPH + H(+). The protein operates within membrane lipid metabolism; glycerophospholipid metabolism. Its function is as follows. Catalyzes the reduction of the glycolytic intermediate dihydroxyacetone phosphate (DHAP) to sn-glycerol 3-phosphate (G3P), the key precursor for phospholipid synthesis. This chain is Glycerol-3-phosphate dehydrogenase [NAD(P)+], found in Moorella thermoacetica (strain ATCC 39073 / JCM 9320).